Reading from the N-terminus, the 630-residue chain is MKSVPLITGGLSFLLSACSGGGGSFDVDDVSNPSSSKPRYQDDTSSSRTKSNLEKLSIPSLGGGMKLVAQNLSGNKEPSFLNENGYISYFSSPSTIEDDVKNVKTENKIHTNPIGLEPNRALQDPNLQKYVYSGLYYIENWKDFSKLATEKKAYSGHYGYAFYYGNKTATDLPVSGVATYKGTWDFITATKYGQNYSLFSNARGQAYFRRSATRGDIDLENNSKNGDIGLISEFSADFGTKKLTGQLSYTKRKTDIQQYEKEKLYDIDAHIYSNRFRGKVTPTKSTSDEHPFTSEGTLEGGFYGPNAEELGGKFLARDKRVFGVFSAKETPETEKEKLSKETLIDGKLITFSTKTADATTSTTASTTADVKTDEKNFTTKDISSFGEADYLLIDNYPVPLFPEGDTDDFVTSKHHDIGNKTYKVEACCKNLSYVKFGMYYEDKEKKNTNQTGQYHQFLLGLRTPSSQIPVTGNVKYLGSWFGYIGDDKTSYSTTGNKQQDKNAPAEFDVNFDNKTLTGKLKRADSQNTVFNIEATFKNGSNAFEGKATANVVIDPKNTQATSKVNFTTTVNGAFYGPHATELGGYFTYNGNNPTATNSESSSTVPSPPNSPNARAAVVFGAKRQVEKTNK.

An N-terminal signal peptide occupies residues methionine 1–alanine 17. A lipid anchor (N-palmitoyl cysteine) is attached at cysteine 18. Cysteine 18 carries the S-diacylglycerol cysteine lipid modification. Disordered stretches follow at residues aspartate 26–leucine 53, valine 280–glycine 301, and asparagine 591–alanine 613. Residues asparagine 32–lysine 50 show a composition bias toward polar residues.

It belongs to the TbpB family.

Its subcellular location is the cell outer membrane. The protein localises to the cell surface. In terms of biological role, haemophilus acquires iron by extracting it from serum transferrin (TF) in its human host. Acts as a transferrin receptor and is required for transferrin utilization. This Haemophilus influenzae (strain 86-028NP) protein is Transferrin-binding protein B.